The primary structure comprises 244 residues: RAD51-like protein 1 (244 aa).

Interacts with brc-2 and rad-51.

The protein resides in the nucleus. Its function is as follows. Has a role in the homologous recombination repair (HRR) of genomic DNA during meiosis. Required for rad-51 recruitment onto ssDNA gaps generated at stalled replication fork barriers. The protein is RAD51-like protein 1 of Caenorhabditis briggsae.